A 342-amino-acid polypeptide reads, in one-letter code: MSAFTPASEVLLRHSDDFEQSRILFAGDLQDDLPARFECAASRAHTQQFHHWQVLSRQMGDNVRFSLVAQASDVADCDTLIYYWPKNKPEAQFQLMNILSLMPSGVDVFVVGENRSGVRSAEPMLADYAPLNKVDSARRCGLYHGRLEKQPQFSLESCWAEYNIDGLTIKTLPGVFSRDGLDVGSQLLLSTLTPHTKGKVLDVGCGAGVLSAALASHSPKVRLTLCDVSAPAVEASRATLAANGLEGEVFASNVFSEVKGRFDMIISNPPFHDGMQTSLDAAQTLIRGAVRHLNSGGELRIVANAFLPYPKILDETFGFHEVIAQTGRFKVYRTVMTRQAKK.

The protein belongs to the methyltransferase superfamily. RsmC family. As to quaternary structure, monomer.

It is found in the cytoplasm. It carries out the reaction guanosine(1207) in 16S rRNA + S-adenosyl-L-methionine = N(2)-methylguanosine(1207) in 16S rRNA + S-adenosyl-L-homocysteine + H(+). Functionally, specifically methylates the guanine in position 1207 of 16S rRNA in the 30S particle. The chain is Ribosomal RNA small subunit methyltransferase C from Salmonella gallinarum (strain 287/91 / NCTC 13346).